The primary structure comprises 1255 residues: Structural polyprotein (1255 aa).

Positions 1-33 (MFPFQPMYPMQPMPYRNPFAAPRRPWFPRTDPF) are necessary for nucleocapsid assembly and virus assembly. The host transcription inhibition stretch occupies residues 33-68 (FLAMQVQELTRSMANLTFKQRRDAPPEGPPAKKPKR). Residues 41–48 (LTRSMANL) carry the Supraphysiological nuclear export signal motif. The segment at 44–119 (SMANLTFKQR…KKPGKRQRMV (76 aa)) is disordered. Positions 64–68 (KKPKR) match the Nuclear localization signal motif. Residues 80–92 (GKKKKNQGKKKAK) are compositionally biased toward basic residues. A binding to the viral RNA region spans residues 91–127 (AKTGPPNPKAQSGNKKKPNKKPGKRQRMVMKLESDKT). Thr93 is modified (phosphothreonine). Residues 104–118 (NKKKPNKKPGKRQRM) are compositionally biased toward basic residues. Positions 112–126 (PGKRQRMVMKLESDK) are ribosome-binding. Ser124 is subject to Phosphoserine. Positions 126–275 (KTFPIMLEGK…KYTPENCEQW (150 aa)) constitute a Peptidase S3 domain. The residue at position 127 (Thr127) is a Phosphothreonine. His152 acts as the Charge relay system in catalysis. Residues 168–173 (KKASKY) form an interaction with spike glycoprotein E2 region. Active-site charge relay system residues include Asp174 and Ser226. The tract at residues 260–264 (EKGVT) is interaction with spike glycoprotein E2. Residues 276-287 (SLVTTMCLLANV) form a functions as an uncleaved signal peptide for the precursor of protein E3/E2 region. Residues 276–701 (SLVTTMCLLA…HYYHRYPMST (426 aa)) lie on the Extracellular side of the membrane. 7 disulfides stabilise this stretch: Cys282–Cys291, Cys353–Cys457, Cys356–Cys361, Cys424–Cys438, Cys485–Cys600, Cys534–Cys560, and Cys536–Cys554. Asn286 is a glycosylation site (N-linked (GlcNAc...) asparagine; by host). Asn652 is a glycosylation site (N-linked (GlcNAc...) asparagine; by host). A helical membrane pass occupies residues 702–722 (ILGLSICAAIVTVSVAASTWL). Residues 723 to 757 (FCKSRVSCLTPYRLTPNARMPLCLAVLCCARTARA) lie on the Cytoplasmic side of the membrane. The interval 725 to 729 (KSRVS) is interaction with the capsid protein. 3 S-palmitoyl cysteine; by host lipidation sites follow: Cys730, Cys750, and Cys751. Positions 730–750 (CLTPYRLTPNARMPLCLAVLC) are transient transmembrane before p62-6K protein processing. Cys730 and Cys751 are joined by a disulfide. Residues 758–769 (ETTWESLDHLWN) are Extracellular-facing. A helical membrane pass occupies residues 770-790 (NNQQMFWIQLLIPLAALIVVT). Residue Arg791 is a topological domain, cytoplasmic. A helical membrane pass occupies residues 792–812 (LLKCVCCVVPFLVVAGAAGAG). Topologically, residues 813-1225 (AYEHATTMPS…SKTAWTWLTS (413 aa)) are extracellular. Disulfide bonds link Cys862-Cys927, Cys875-Cys907, Cys876-Cys909, and Cys881-Cys891. An E1 fusion peptide loop region spans residues 897–914 (VYPFMWGGAYCFCDTENT). Asn947 and Asn1083 each carry an N-linked (GlcNAc...) asparagine; by host glycan. Disulfide bonds link Cys1072/Cys1084, Cys1114/Cys1189, Cys1119/Cys1193, and Cys1141/Cys1183. A helical membrane pass occupies residues 1226–1246 (LLGGSAVIIIIGLVLATIVAM). The Cytoplasmic segment spans residues 1247-1255 (YVLTNQKHN).

Homodimer. Homomultimer. Interacts with host karyopherin KPNA4; this interaction allows the nuclear import of the viral capsid protein. Interacts with spike glycoprotein E2. Interacts with host IRAK1; the interaction leads to inhibition of IRAK1-dependent signaling. Part of a tetrameric complex composed of host CRM1, host importin alpha/beta dimer and the viral capsid; this complex blocks the receptor-mediated transport through the nuclear pore. Interacts with host phosphatase PPP1CA; this interaction dephosphorylates the capsid protein, which increases its ability to bind to the viral genome. In terms of assembly, the precursor of protein E3/E2 and E1 form a heterodimer shortly after synthesis. As to quaternary structure, interacts with spike glycoprotein E2. The precursor of protein E3/E2 and E1 form a heterodimer shortly after synthesis. Processing of the precursor of protein E3/E2 into E2 and E3 results in a heterodimer of the spike glycoproteins E2 and E1. Spike at virion surface are constituted of three E2-E1 heterodimers. After target cell attachment and endocytosis, E1 change conformation to form homotrimers. Interacts with 6K protein. Interacts with host LDLRAD3; this interaction mediates viral entry to the host cell. Interacts with spike glycoprotein E1. Processing of the precursor of protein E3/E2 into E2 and E3 results in a heterodimer of the spike glycoproteins E2 and E1. Spike at virion surface are constituted of a trimer of E2-E1 heterodimers. Interacts with 6K protein. Interacts with host LDLRAD3; this interaction mediates viral entry to the host cell. In terms of assembly, oligomer. Interacts with spike glycoprotein E1. Interacts with spike glycoprotein E2. In terms of processing, structural polyprotein: Specific enzymatic cleavages in vivo yield mature proteins. Capsid protein is auto-cleaved during polyprotein translation, unmasking a signal peptide at the N-terminus of the precursor of E3/E2. The remaining polyprotein is then targeted to the host endoplasmic reticulum, where host signal peptidase cleaves it into pE2, 6K and E1 proteins. pE2 is further processed to mature E3 and E2 by host furin in trans-Golgi vesicle. Phosphorylated on serine and threonine residues. Post-translationally, palmitoylated via thioester bonds. These palmitoylations may induce disruption of the C-terminus transmembrane. This would result in the reorientation of E2 C-terminus from lumenal to cytoplasmic side. In terms of processing, N-glycosylated. Palmitoylated via thioester bonds.

The protein localises to the virion. The protein resides in the host cytoplasm. It localises to the host cell membrane. It is found in the host nucleus. Its subcellular location is the virion membrane. The protein localises to the host Golgi apparatus. The protein resides in the host trans-Golgi network. It localises to the host endoplasmic reticulum. It catalyses the reaction Autocatalytic release of the core protein from the N-terminus of the togavirus structural polyprotein by hydrolysis of a -Trp-|-Ser- bond.. Forms an icosahedral capsid with a T=4 symmetry composed of 240 copies of the capsid protein surrounded by a lipid membrane through which penetrate 80 spikes composed of trimers of E1-E2 heterodimers. The capsid protein binds to the viral RNA genome at a site adjacent to a ribosome binding site for viral genome translation following genome release. Possesses a protease activity that results in its autocatalytic cleavage from the nascent structural protein. Following its self-cleavage, the capsid protein transiently associates with ribosomes, and within several minutes the protein binds to viral RNA and rapidly assembles into icosahedric core particles. The resulting nucleocapsid eventually associates with the cytoplasmic domain of the spike glycoprotein E2 at the cell membrane, leading to budding and formation of mature virions. In case of infection, new virions attach to target cells and after clathrin-mediated endocytosis their membrane fuses with the host endosomal membrane. This leads to the release of the nucleocapsid into the cytoplasm, followed by an uncoating event necessary for the genomic RNA to become accessible. The uncoating might be triggered by the interaction of capsid proteins with ribosomes. Binding of ribosomes would release the genomic RNA since the same region is genomic RNA-binding and ribosome-binding. Specifically inhibits interleukin-1 receptor-associated kinase 1/IRAK1-dependent signaling during viral entry, representing a means by which the alphaviruses may evade innate immune detection and activation prior to viral gene expression. Inhibits host transcription. Forms a tetrameric complex with XPO1/CRM1 and the nuclear import receptor importin. This complex blocks the central channel of host nuclear pores thereby inhibiting the receptor-mediated nuclear transport and thus the host mRNA and rRNA transcription. The inhibition of transcription is linked to a cytopathic effect on the host cell. Its function is as follows. Provides the signal sequence for the translocation of the precursor of protein E3/E2 to the host endoplasmic reticulum. Furin-cleaved E3 remains associated with spike glycoprotein E1 and mediates pH protection of the latter during the transport via the secretory pathway. After virion release from the host cell, the assembly protein E3 is gradually released in the extracellular space. In terms of biological role, plays a role in viral attachment to target host cell, by binding to the cell receptor LDLRAD3. Synthesized as a p62 precursor which is processed by furin at the cell membrane just before virion budding, giving rise to E2-E1 heterodimer. The p62-E1 heterodimer is stable, whereas E2-E1 is unstable and dissociate at low pH. p62 is processed at the last step, presumably to avoid E1 fusion activation before its final export to cell surface. E2 C-terminus contains a transitory transmembrane that would be disrupted by palmitoylation, resulting in reorientation of the C-terminal tail from lumenal to cytoplasmic side. This step is critical since E2 C-terminus is involved in budding by interacting with capsid proteins. This release of E2 C-terminus in cytoplasm occurs lately in protein export, and precludes premature assembly of particles at the endoplasmic reticulum membrane. Functionally, acts as a viroporin that participates in virus glycoprotein processing and transport to the plasma membrane, cell permeabilization and budding of viral particles. Disrupts the calcium homeostasis of the cell, probably at the endoplasmic reticulum level. This leads to cytoplasmic calcium elevation. Because of its lipophilic properties, the 6K protein is postulated to influence the selection of lipids that interact with the transmembrane domains of the glycoproteins, which, in turn, affects the deformability of the bilayer required for the extreme curvature that occurs as budding proceeds. Present in low amount in virions, about 3% compared to viral glycoproteins. Class II viral fusion protein. Fusion activity is inactive as long as E1 is bound to E2 in mature virion. After virus attachment to cell receptor LDLRAD3 and endocytosis, acidification of the endosome induce dissociation of E1/E2 heterodimer and concomitant trimerization of the E1 subunits. This E1 trimer is fusion active, and promotes release of viral nucleocapsid in cytoplasm after endosome and viral membrane fusion. Efficient fusion requires the presence of cholesterol and sphingolipid in the target membrane. In Venezuelan equine encephalitis virus (strain P676) (VEEV), this protein is Structural polyprotein.